Reading from the N-terminus, the 364-residue chain is DNA polymerase IV (364 aa).

The UmuC domain maps to 14–198 (IIHIDMDAFF…LPIEKFHGVG (185 aa)). Mg(2+) is bound by residues aspartate 18 and aspartate 116. The active site involves glutamate 117.

This sequence belongs to the DNA polymerase type-Y family. In terms of assembly, monomer. Mg(2+) is required as a cofactor.

It is found in the cytoplasm. The enzyme catalyses DNA(n) + a 2'-deoxyribonucleoside 5'-triphosphate = DNA(n+1) + diphosphate. Poorly processive, error-prone DNA polymerase involved in untargeted mutagenesis. Copies undamaged DNA at stalled replication forks, which arise in vivo from mismatched or misaligned primer ends. These misaligned primers can be extended by PolIV. Exhibits no 3'-5' exonuclease (proofreading) activity. May be involved in translesional synthesis, in conjunction with the beta clamp from PolIII. The chain is DNA polymerase IV from Streptococcus pyogenes serotype M28 (strain MGAS6180).